A 106-amino-acid chain; its full sequence is Large ribosomal subunit protein uL23 (106 aa).

Belongs to the universal ribosomal protein uL23 family. In terms of assembly, part of the 50S ribosomal subunit. Contacts protein L29, and trigger factor when it is bound to the ribosome.

Functionally, one of the early assembly proteins it binds 23S rRNA. One of the proteins that surrounds the polypeptide exit tunnel on the outside of the ribosome. Forms the main docking site for trigger factor binding to the ribosome. This is Large ribosomal subunit protein uL23 from Neisseria gonorrhoeae (strain ATCC 700825 / FA 1090).